The primary structure comprises 355 residues: UDP-N-acetylglucosamine--N-acetylmuramyl-(pentapeptide) pyrophosphoryl-undecaprenol N-acetylglucosamine transferase (355 aa).

Residues threonine 15 to glycine 17, asparagine 127, arginine 163, serine 191, isoleucine 244, alanine 263 to glutamate 268, and glutamine 288 each bind UDP-N-acetyl-alpha-D-glucosamine.

It belongs to the glycosyltransferase 28 family. MurG subfamily.

The protein resides in the cell inner membrane. It catalyses the reaction di-trans,octa-cis-undecaprenyl diphospho-N-acetyl-alpha-D-muramoyl-L-alanyl-D-glutamyl-meso-2,6-diaminopimeloyl-D-alanyl-D-alanine + UDP-N-acetyl-alpha-D-glucosamine = di-trans,octa-cis-undecaprenyl diphospho-[N-acetyl-alpha-D-glucosaminyl-(1-&gt;4)]-N-acetyl-alpha-D-muramoyl-L-alanyl-D-glutamyl-meso-2,6-diaminopimeloyl-D-alanyl-D-alanine + UDP + H(+). It functions in the pathway cell wall biogenesis; peptidoglycan biosynthesis. Cell wall formation. Catalyzes the transfer of a GlcNAc subunit on undecaprenyl-pyrophosphoryl-MurNAc-pentapeptide (lipid intermediate I) to form undecaprenyl-pyrophosphoryl-MurNAc-(pentapeptide)GlcNAc (lipid intermediate II). In Escherichia coli O127:H6 (strain E2348/69 / EPEC), this protein is UDP-N-acetylglucosamine--N-acetylmuramyl-(pentapeptide) pyrophosphoryl-undecaprenol N-acetylglucosamine transferase.